The following is a 482-amino-acid chain: Pyruvate kinase (482 aa).

Position 37 (R37) interacts with substrate. N39, S41, and D71 together coordinate K(+). 39 to 42 (NFSH) lines the ATP pocket. ATP is bound by residues R78 and K160. E222 lines the Mg(2+) pocket. 3 residues coordinate substrate: G245, D246, and T278. A Mg(2+)-binding site is contributed by D246.

Belongs to the pyruvate kinase family. As to quaternary structure, homotetramer. Mg(2+) is required as a cofactor. The cofactor is K(+).

It catalyses the reaction pyruvate + ATP = phosphoenolpyruvate + ADP + H(+). Its pathway is carbohydrate degradation; glycolysis; pyruvate from D-glyceraldehyde 3-phosphate: step 5/5. This is Pyruvate kinase (ttuE) from Agrobacterium vitis (Rhizobium vitis).